Consider the following 490-residue polypeptide: Nuclear transcription factor Y subunit beta (490 aa).

The interval 1 to 48 (MSGNEDFIYDDNSSSSISNQTDGGGGGGSSNNNSGGNANNNNNEGDRE) is disordered. The span at 30 to 43 (SNNNSGGNANNNNN) shows a compositional bias: low complexity. A DNA-binding region spans residues 53–59 (LPIANII). Residues 80 to 91 (VQDCVSEFISFI) are subunit association domain (SAD). 2 disordered regions span residues 139–195 (EKNS…QQQQ) and 221–264 (QQQQ…NQQY). The segment covering 181-195 (QQQQQPPQVQQQQQQ) has biased composition (low complexity). Positions 188 to 219 (QVQQQQQQQQQQQQQQLQQQQQLQQHQQQQLQ) form a coiled coil. The stretch at 269-307 (QQQQQQQQQQQQQQQQQQQQQQQQQQQQQQQQQQQQQVQ) forms a coiled coil. 2 disordered regions span residues 325–370 (NQQA…QHLQ) and 399–490 (QFSN…PSTS). Low complexity predominate over residues 399 to 468 (QFSNNNNNNN…GNSLHNSGNS (70 aa)). Residues 478-490 (PYISTNPEYPSTS) show a composition bias toward polar residues.

It belongs to the NFYB/HAP3 subunit family. Heterotrimeric transcription factor composed of three components, nfyA, nfyB and nfyC. nfyB and nfyC must interact and dimerize for nfyA association and DNA binding.

The protein localises to the nucleus. Its function is as follows. Component of the NF-Y/HAP transcription factor complex. The NF-Y complex stimulates the transcription of various genes by recognizing and binding to a CCAAT motif in promoters. The polypeptide is Nuclear transcription factor Y subunit beta (nfyB) (Dictyostelium discoideum (Social amoeba)).